Reading from the N-terminus, the 267-residue chain is 1-(5-phosphoribosyl)-5-[(5-phosphoribosylamino)methylideneamino] imidazole-4-carboxamide isomerase (267 aa).

Belongs to the HisA/HisF family.

It is found in the cytoplasm. The enzyme catalyses 1-(5-phospho-beta-D-ribosyl)-5-[(5-phospho-beta-D-ribosylamino)methylideneamino]imidazole-4-carboxamide = 5-[(5-phospho-1-deoxy-D-ribulos-1-ylimino)methylamino]-1-(5-phospho-beta-D-ribosyl)imidazole-4-carboxamide. It participates in amino-acid biosynthesis; L-histidine biosynthesis; L-histidine from 5-phospho-alpha-D-ribose 1-diphosphate: step 4/9. In Kluyveromyces lactis (strain ATCC 8585 / CBS 2359 / DSM 70799 / NBRC 1267 / NRRL Y-1140 / WM37) (Yeast), this protein is 1-(5-phosphoribosyl)-5-[(5-phosphoribosylamino)methylideneamino] imidazole-4-carboxamide isomerase (HIS6).